Reading from the N-terminus, the 271-residue chain is Exosome complex component Rrp42 (271 aa).

It belongs to the RNase PH family. Rrp42 subfamily. As to quaternary structure, component of the archaeal exosome complex. Forms a hexameric ring-like arrangement composed of 3 Rrp41-Rrp42 heterodimers. The hexameric ring associates with a trimer of Rrp4 and/or Csl4 subunits.

Its subcellular location is the cytoplasm. Its function is as follows. Non-catalytic component of the exosome, which is a complex involved in RNA degradation. Contributes to the structuring of the Rrp41 active site. This Methanothermobacter thermautotrophicus (strain ATCC 29096 / DSM 1053 / JCM 10044 / NBRC 100330 / Delta H) (Methanobacterium thermoautotrophicum) protein is Exosome complex component Rrp42.